The following is a 249-amino-acid chain: ATP synthase subunit a, chloroplastic (249 aa).

The next 5 helical transmembrane spans lie at 40–60 (QVLI…VLAI), 97–117 (VPFI…GALL), 136–156 (INTT…AGLS), 201–221 (LVVV…VMFL), and 222–242 (GLFT…AYIG).

Belongs to the ATPase A chain family. F-type ATPases have 2 components, CF(1) - the catalytic core - and CF(0) - the membrane proton channel. CF(1) has five subunits: alpha(3), beta(3), gamma(1), delta(1), epsilon(1). CF(0) has four main subunits: a, b, b' and c.

It localises to the plastid. It is found in the chloroplast thylakoid membrane. Functionally, key component of the proton channel; it plays a direct role in the translocation of protons across the membrane. The chain is ATP synthase subunit a, chloroplastic from Olimarabidopsis pumila (Dwarf rocket).